The following is a 423-amino-acid chain: GTPase HflX (423 aa).

Positions 202 to 366 (PAAAIVGYTN…LLETILRNQK (165 aa)) constitute a Hflx-type G domain. GTP contacts are provided by residues 208–215 (GYTNAGKS), 233–237 (FATLD), 255–258 (DTVG), 321–324 (NKID), and 344–346 (SAK). Ser-215 and Thr-235 together coordinate Mg(2+).

The protein belongs to the TRAFAC class OBG-HflX-like GTPase superfamily. HflX GTPase family. In terms of assembly, monomer. Associates with the 50S ribosomal subunit. Mg(2+) is required as a cofactor.

The protein resides in the cytoplasm. In terms of biological role, GTPase that associates with the 50S ribosomal subunit and may have a role during protein synthesis or ribosome biogenesis. The polypeptide is GTPase HflX (Lacrimispora saccharolytica (strain ATCC 35040 / DSM 2544 / NRCC 2533 / WM1) (Clostridium saccharolyticum)).